Reading from the N-terminus, the 2497-residue chain is Integrator complex subunit 1 homolog (2497 aa).

The segment covering Met1 to Lys10 has biased composition (basic residues). 6 disordered regions span residues Met1–Ile151, Gln300–Ser337, Gln946–Thr965, Thr1028–Ser1108, Ile1234–Ser1292, and Asn1572–Thr1604. 5 stretches are compositionally biased toward low complexity: residues Ser37–Asp46, Asn60–Ile151, Gln305–Gln333, Gln946–Gln963, and Thr1028–Leu1058. Positions Ser1075–Ile1091 are enriched in polar residues. Low complexity-rich tracts occupy residues Ser1097–Ser1108, Ile1234–Lys1265, His1272–Asn1289, and Asn1572–Asn1602. A coiled-coil region spans residues Arg1645 to Ile1675. Residues Gln2084–Asn2115 are compositionally biased toward low complexity. 2 disordered regions span residues Gln2084–Lys2123 and Asn2329–Asn2350.

Belongs to the Integrator subunit 1 family. In terms of assembly, component of the Integrator complex. The core complex associates with protein phosphatase 2A subunits to form the Integrator-PP2A (INTAC) complex.

The protein localises to the nucleus. Functionally, component of the integrator complex, a multiprotein complex that terminates RNA polymerase II (Pol II) transcription in the promoter-proximal region of genes. The integrator complex provides a quality checkpoint during transcription elongation by driving premature transcription termination of transcripts that are unfavorably configured for transcriptional elongation: the complex terminates transcription by (1) catalyzing dephosphorylation of the C-terminal domain (CTD) of Pol II subunit polr2a, (2) degrading the exiting nascent RNA transcript via endonuclease activity and (3) promoting the release of Pol II from bound DNA. The integrator complex is also involved in terminating the synthesis of non-coding Pol II transcripts, such as enhancer RNAs (eRNAs), small nuclear RNAs (snRNAs), telomerase RNAs and long non-coding RNAs (lncRNAs). The polypeptide is Integrator complex subunit 1 homolog (ints1) (Dictyostelium discoideum (Social amoeba)).